Reading from the N-terminus, the 434-residue chain is D-amino acid dehydrogenase (434 aa).

3 to 17 (VIVLGSGVIGTTTAY) is a binding site for FAD.

It belongs to the DadA oxidoreductase family. FAD serves as cofactor.

The catalysed reaction is a D-alpha-amino acid + A + H2O = a 2-oxocarboxylate + AH2 + NH4(+). It participates in amino-acid degradation; D-alanine degradation; NH(3) and pyruvate from D-alanine: step 1/1. Its function is as follows. Oxidative deamination of D-amino acids. The sequence is that of D-amino acid dehydrogenase from Bordetella petrii (strain ATCC BAA-461 / DSM 12804 / CCUG 43448).